Reading from the N-terminus, the 683-residue chain is Synaptic vesicle glycoprotein 2B (683 aa).

The segment covering 1-10 (MDDYRYRDNY) has biased composition (basic and acidic residues). The disordered stretch occupies residues 1-72 (MDDYRYRDNY…QTKMAPSRAD (72 aa)). Over 1–110 (MDDYRYRDNY…ECGHGRFQWT (110 aa)) the chain is Cytoplasmic. Position 33 is a phosphoserine (S33). T36 bears the Phosphothreonine mark. Residues 111 to 131 (LFFVLVLALMADGVEVFVVSF) traverse the membrane as a helical segment. Residues 132–148 (ALPSAEKDMCLSSSKKG) are Extracellular-facing. A helical membrane pass occupies residues 149 to 169 (MLGLIVYLGMMAGAFILGGLA). Over 170–182 (DKLGRKKVLSMSL) the chain is Cytoplasmic. The chain crosses the membrane as a helical span at residues 183-203 (AINASFASLSSFVQGYGAFLF). At 204-205 (CR) the chain is on the extracellular side. A helical membrane pass occupies residues 206-226 (LISGIGIGGSLPIVFAYFSEF). Residues 227 to 237 (LSREKRGEHLS) lie on the Cytoplasmic side of the membrane. The chain crosses the membrane as a helical span at residues 238–258 (WLGIFWMTGGIYASAMAWSII). Residues 259–277 (PHYGWGFSMGTNYHFHSWR) are Extracellular-facing. A helical membrane pass occupies residues 278 to 298 (VFVIVCALPATVSMVALKFMP). At 299 to 390 (ESPRFLLEMG…CVMGPYRMNT (92 aa)) the chain is on the cytoplasmic side. Residues 391–411 (LILAVVWFTMALSYYGLTVWF) traverse the membrane as a helical segment. Residues 412-535 (PDMIRYFQDE…CHMDFEEDND (124 aa)) lie on the Extracellular side of the membrane. A Phosphotyrosine modification is found at Y423. Residues N441, N491, and N516 are each glycosylated (N-linked (GlcNAc...) asparagine). A helical transmembrane segment spans residues 536 to 556 (FLIYLVSFLGSLSVLPGNIIS). Residues 557–565 (ALLMDRIGR) are Cytoplasmic-facing. The chain crosses the membrane as a helical span at residues 566 to 586 (LKMIGGSMLISAVCCFFLFFG). Residues 587 to 592 (NSESAM) lie on the Extracellular side of the membrane. Residues 593-613 (IGWQCLFCGTSIAAWNALDVI) traverse the membrane as a helical segment. Over 614–626 (TVELYPTNQRATA) the chain is Cytoplasmic. Residues 627–649 (FGILNGLCKLGAILGNTIFASFV) traverse the membrane as a helical segment. At 650–653 (GITK) the chain is on the extracellular side. A helical membrane pass occupies residues 654–672 (VVPILLAAASLVGGGLVAL). Residues 673-683 (RLPETREQVLM) are Cytoplasmic-facing.

The protein belongs to the major facilitator superfamily. Interacts with SYT1 in a calcium-independent manner. Forms a complex with SYT1, syntaxin-1 and SNAP25. In terms of assembly, (Microbial infection) Interacts with C.botulinum neurotoxin type A1 and type A2 (BoNT/A, botA). Interaction is improved by glycosylation of SV2. As to quaternary structure, (Microbial infection) Interacts with C.botulinum neurotoxin type D (BoNT/D, botD). (Microbial infection) Interacts with C.botulinum neurotoxin type E (BoNT/E). Interaction requires glycosylation of SV2 proteins. In terms of assembly, (Microbial infection) Interacts with C.botulinum neurotoxin type F (BoNT/F). Interaction requires glycosylation of SV2 proteins. Post-translationally, N-glycosylated. The N-terminal cytoplasmic domain is phosphorylated by CK1. As to expression, widely expressed throughout the brain. Specifically expressed by pinealocytes in the pineal gland. Also detected in testis (at protein level). Specifically expressed in neural tissues. Expressed in the spinal cord and in all brain regions with a stronger expression in hippocampus and cortex.

It is found in the cytoplasmic vesicle. Its subcellular location is the secretory vesicle. It localises to the synaptic vesicle membrane. The protein resides in the acrosome. Its function is as follows. Probably plays a role in the control of regulated secretion in neural and endocrine cells. In terms of biological role, (Microbial infection) Receptor for C.botulinum neurotoxin type A (BoNT/A, botA); the toxin binds via extracellular loop 4. Restores uptake of BoNT/A in mouse and rat cells that are deleted for SV2 receptor. Glycosylation of SV2B is not essential for receptor activity, but enhances the interaction. Also serves as a receptor for the closely related C.botulinum neurotoxin type A2; glycosylation is not essential but enhances the interaction. (Microbial infection) Possible receptor for C.botulinum neurotoxin type D (BoNT/D, botD); BoNT/D does not bind to extracellular loop 4 as do BoNT/A and BoNT/E. Another group does not find a convincing interaction with SV2. Functionally, (Microbial infection) Receptor for C.botulinum neurotoxin type E (BoNT/E); the toxin probably binds via extracellular loop 4. Restores uptake of BoNT/E in mouse cells that are deleted for SV2 receptor. Glycosylation of SV2B is not essential for receptor activity, but enhances the interaction. Its function is as follows. (Microbial infection) Receptor for C.botulinum neurotoxin type F (BoNT/F); binding requires glycosylation of this protein. This Rattus norvegicus (Rat) protein is Synaptic vesicle glycoprotein 2B (Sv2b).